A 669-amino-acid polypeptide reads, in one-letter code: Zinc finger CCCH domain-containing protein 17 (669 aa).

Positions 1–11 are enriched in low complexity; that stretch reads MFAPATQPQQQ. The disordered stretch occupies residues 1-23; that stretch reads MFAPATQPQQQHEQKKQSETVSS. 3 C3H1-type zinc fingers span residues 34–58, 60–86, and 114–141; these read DCVYFLASPLTCKKGPECEYRHSEY, RMNPRDCYYWLNGNCLNPKCGFRHPPL, and AKQPVPCLFFQKGMCMKGDMCSFLHTPN. Disordered regions lie at residues 150-175, 285-306, 376-589, and 642-669; these read PVEAKPATDPQCSKKPIENNTEEKKL, VEDRYGRRSQERGNSEYDPDFS, GMRL…VMEE, and EEGEEEATEGGEGEGEEDIEKKTVEMLS. 6 stretches are compositionally biased toward basic and acidic residues: residues 164–175, 285–299, 392–406, 420–464, 478–499, and 547–579; these read KPIENNTEEKKL, VEDRYGRRSQERGNS, SMDRGYRESRRDTPR, KLRE…EENH, RRREMEDERKSAPKSSREESKP, and NNKDETISKEEAGDEIKLITEEKTEVVSEPKAE. 2 stretches are compositionally biased toward acidic residues: residues 580 to 589 and 642 to 659; these read VEEEGTVMEE and EEGEEEATEGGEGEGEED. Basic and acidic residues predominate over residues 660–669; the sequence is IEKKTVEMLS.

The chain is Zinc finger CCCH domain-containing protein 17 from Arabidopsis thaliana (Mouse-ear cress).